Consider the following 432-residue polypeptide: Neuropeptide FF receptor 1 (432 aa).

Residues 1 to 43 are Extracellular-facing; it reads MEAEPSQPPNGSWPLGQNGSDVETSMATSLTFSSYYQHSSPVA. N-linked (GlcNAc...) asparagine glycans are attached at residues Asn-10 and Asn-18. Residues 44-64 form a helical membrane-spanning segment; sequence AMFIAAYVLIFLLCMVGNTLV. The Cytoplasmic portion of the chain corresponds to 65 to 80; the sequence is CFIVLKNRHMRTVTNM. A helical transmembrane segment spans residues 81–101; that stretch reads FILNLAVSDLLVGIFCMPTTL. Residues 102-117 are Extracellular-facing; the sequence is VDNLITGWPFDNATCK. Asn-113 is a glycosylation site (N-linked (GlcNAc...) asparagine). Cys-116 and Cys-203 form a disulfide bridge. A helical transmembrane segment spans residues 118–138; it reads MSGLVQGMSVSASVFTLVAIA. Over 139-158 the chain is Cytoplasmic; the sequence is VERFRCIVHPFREKLTLRKA. The helical transmembrane segment at 159–179 threads the bilayer; it reads LFTIAVIWALALLIMCPSAVT. The Extracellular segment spans residues 180–214; sequence LTVTREEHHFMLDARNRSYPLYSCWEAWPEKGMRK. Residue Asn-195 is glycosylated (N-linked (GlcNAc...) asparagine). The chain crosses the membrane as a helical span at residues 215–235; the sequence is VYTAVLFAHIYLVPLALIVVM. Over 236–273 the chain is Cytoplasmic; that stretch reads YVRIARKLCQAPGPARDTEEAVAEGGRTSRRRARVVHM. Residues 274-294 form a helical membrane-spanning segment; sequence LVMVALFFTLSWLPLWVLLLL. Residues 295-309 lie on the Extracellular side of the membrane; the sequence is IDYGELSELQLHLLS. Residues 310–330 traverse the membrane as a helical segment; it reads VYAFPLAHWLAFFHSSANPII. Topologically, residues 331-432 are cytoplasmic; that stretch reads YGYFNENFRR…MPLTIPAWNI (102 aa). Over residues 380 to 406 the composition is skewed to low complexity; it reads PSDSGLPSESGPSSGVPGPGRLPLRNG. Residues 380 to 422 are disordered; that stretch reads PSDSGLPSESGPSSGVPGPGRLPLRNGRVAHQDGPGEGPGCNH.

Belongs to the G-protein coupled receptor 1 family. As to expression, expressed at high levels in the hypothalamus. Moderate levels found in the midbrain, thalamus, medulla oblongata, testis, eye, whole brain, cerebral cortex, striatum, hippocampus, cerebellum, optic nerve, placenta, spinal cord, pituitary gland and ovary.

The protein resides in the cell membrane. In terms of biological role, receptor for NPAF (A-18-F-amide) and NPFF (F-8-F-amide) neuropeptides, also known as morphine-modulating peptides. Can also be activated by a variety of naturally occurring or synthetic FMRF-amide like ligands. This receptor mediates its action by association with G proteins that activate a phosphatidylinositol-calcium second messenger system. This Rattus norvegicus (Rat) protein is Neuropeptide FF receptor 1 (Npffr1).